Here is a 234-residue protein sequence, read N- to C-terminus: Ubiquinone biosynthesis O-methyltransferase (234 aa).

4 residues coordinate S-adenosyl-L-methionine: Arg36, Gly56, Asp77, and Met125.

Belongs to the methyltransferase superfamily. UbiG/COQ3 family.

The enzyme catalyses a 3-demethylubiquinol + S-adenosyl-L-methionine = a ubiquinol + S-adenosyl-L-homocysteine + H(+). It carries out the reaction a 3-(all-trans-polyprenyl)benzene-1,2-diol + S-adenosyl-L-methionine = a 2-methoxy-6-(all-trans-polyprenyl)phenol + S-adenosyl-L-homocysteine + H(+). It participates in cofactor biosynthesis; ubiquinone biosynthesis. In terms of biological role, O-methyltransferase that catalyzes the 2 O-methylation steps in the ubiquinone biosynthetic pathway. The polypeptide is Ubiquinone biosynthesis O-methyltransferase (Actinobacillus pleuropneumoniae serotype 7 (strain AP76)).